The chain runs to 229 residues: Enolase-phosphatase E1 (229 aa).

Belongs to the HAD-like hydrolase superfamily. MasA/MtnC family. As to quaternary structure, monomer. Requires Mg(2+) as cofactor.

The catalysed reaction is 5-methylsulfanyl-2,3-dioxopentyl phosphate + H2O = 1,2-dihydroxy-5-(methylsulfanyl)pent-1-en-3-one + phosphate. Its pathway is amino-acid biosynthesis; L-methionine biosynthesis via salvage pathway; L-methionine from S-methyl-5-thio-alpha-D-ribose 1-phosphate: step 3/6. The protein operates within amino-acid biosynthesis; L-methionine biosynthesis via salvage pathway; L-methionine from S-methyl-5-thio-alpha-D-ribose 1-phosphate: step 4/6. Functionally, bifunctional enzyme that catalyzes the enolization of 2,3-diketo-5-methylthiopentyl-1-phosphate (DK-MTP-1-P) into the intermediate 2-hydroxy-3-keto-5-methylthiopentenyl-1-phosphate (HK-MTPenyl-1-P), which is then dephosphorylated to form the acireductone 1,2-dihydroxy-3-keto-5-methylthiopentene (DHK-MTPene). The sequence is that of Enolase-phosphatase E1 from Serratia proteamaculans (strain 568).